Reading from the N-terminus, the 325-residue chain is Formimidoylglutamase (325 aa).

Residues histidine 130, aspartate 156, histidine 158, aspartate 160, cysteine 244, and aspartate 246 each coordinate Mn(2+).

The protein belongs to the arginase family. Requires Mn(2+) as cofactor.

It catalyses the reaction N-formimidoyl-L-glutamate + H2O = formamide + L-glutamate. The protein operates within amino-acid degradation; L-histidine degradation into L-glutamate; L-glutamate from N-formimidoyl-L-glutamate (hydrolase route): step 1/1. Functionally, catalyzes the conversion of N-formimidoyl-L-glutamate to L-glutamate and formamide. The sequence is that of Formimidoylglutamase from Geobacillus sp. (strain WCH70).